The sequence spans 143 residues: Polyadenylate-binding protein-interacting protein 2 (143 aa).

The PAM2-like motif lies at 11–21 (TLNPNAPVFDP).

This chain is Polyadenylate-binding protein-interacting protein 2 (CID2), found in Arabidopsis thaliana (Mouse-ear cress).